Here is a 245-residue protein sequence, read N- to C-terminus: Ureidoacrylate amidohydrolase RutB (245 aa).

The Proton acceptor role is filled by Asp41. Lys150 is an active-site residue. Cys183 acts as the Nucleophile in catalysis.

This sequence belongs to the isochorismatase family. RutB subfamily.

It catalyses the reaction (Z)-3-ureidoacrylate + H2O + H(+) = (Z)-3-aminoacrylate + NH4(+) + CO2. The enzyme catalyses (Z)-3-ureidoacrylate + H2O = (Z)-3-aminoacrylate + carbamate + H(+). It carries out the reaction (Z)-2-methylureidoacrylate + H2O + H(+) = (Z)-2-methylaminoacrylate + NH4(+) + CO2. Hydrolyzes ureidoacrylate to form aminoacrylate and carbamate. The carbamate hydrolyzes spontaneously, thereby releasing one of the nitrogen atoms of the pyrimidine ring as ammonia and one of its carbon atoms as CO2. The sequence is that of Ureidoacrylate amidohydrolase RutB from Pseudomonas syringae pv. syringae (strain B728a).